The chain runs to 184 residues: Bifunctional protein PyrR (184 aa).

The PRPP-binding signature appears at V105 to T117.

This sequence belongs to the purine/pyrimidine phosphoribosyltransferase family. PyrR subfamily.

It carries out the reaction UMP + diphosphate = 5-phospho-alpha-D-ribose 1-diphosphate + uracil. Regulates the transcription of the pyrimidine nucleotide (pyr) operon in response to exogenous pyrimidines. In terms of biological role, also displays a weak uracil phosphoribosyltransferase activity which is not physiologically significant. The protein is Bifunctional protein PyrR of Rubrobacter xylanophilus (strain DSM 9941 / JCM 11954 / NBRC 16129 / PRD-1).